Consider the following 185-residue polypeptide: Ribosome-recycling factor (185 aa).

Belongs to the RRF family.

Its subcellular location is the cytoplasm. Its function is as follows. Responsible for the release of ribosomes from messenger RNA at the termination of protein biosynthesis. May increase the efficiency of translation by recycling ribosomes from one round of translation to another. This chain is Ribosome-recycling factor, found in Salmonella paratyphi A (strain ATCC 9150 / SARB42).